The following is a 76-amino-acid chain: Brevinin-2ISb (76 aa).

The first 22 residues, methionine 1–cysteine 22, serve as a signal peptide directing secretion. Positions glutamine 23–valine 41 are cleaved as a propeptide — removed in mature form. Cysteine 70 and cysteine 76 are joined by a disulfide.

Expressed by the skin glands.

It localises to the secreted. Functionally, has antimicrobial activity against Gram-negative bacterium E.coli ATCC 8739 (MIC=12.5 ug), against Gram positive bacteria S.aureus ATCC 6538 (MIC=6.3 ug) and B.subtilis ATCC 6633 (MIC=25 ug). Has no activity against methicillin-resistant S.aureus ATCC 43300 (MIC= ug) and fungus C.albicans ATCC 90028. This chain is Brevinin-2ISb, found in Odorrana ishikawae (Ishikawa's frog).